A 232-amino-acid chain; its full sequence is MIFQTPLVTGRLERRYKRFLADVTLDDGRFITASVPNTGSMLGLTAPGSRVWLSVSDAPHRKYAHTLQIVEADNTLVGVNTGLPNRIAEEAILNSLIPDLAGYASLKREQKYGRNSRIDLLLDDGPRQRAYVEVKNVHFIRTLGLAEFPDTVTARGAKHLDELVDVVAAGHRGVMLFIIQRNDCSRFSISGDLDPTYARAFERARANGVEAWAVRCHITDKSIDASELVPIE.

It belongs to the SfsA family.

The polypeptide is Sugar fermentation stimulation protein homolog (Brucella anthropi (strain ATCC 49188 / DSM 6882 / CCUG 24695 / JCM 21032 / LMG 3331 / NBRC 15819 / NCTC 12168 / Alc 37) (Ochrobactrum anthropi)).